A 100-amino-acid polypeptide reads, in one-letter code: UPF0235 protein Cvib_0403 (100 aa).

The protein belongs to the UPF0235 family.

In Chlorobium phaeovibrioides (strain DSM 265 / 1930) (Prosthecochloris vibrioformis (strain DSM 265)), this protein is UPF0235 protein Cvib_0403.